The following is a 283-amino-acid chain: SNAP25 homologous protein SNAP32 (283 aa).

2 disordered regions span residues 1–64 (MSGR…AAAR) and 192–212 (LGLSDHPPQSNARQFHSEPTS). Polar residues predominate over residues 198–212 (PPQSNARQFHSEPTS). In terms of domain architecture, t-SNARE coiled-coil homology spans 218-280 (EMEKAKQDDG…KGANTRARRL (63 aa)).

It belongs to the SNAP-25 family. Interacts with SYP121. Expressed in roots, culms and leaves.

It is found in the membrane. T-SNARE involved in diverse vesicle trafficking and membrane fusion processes. May be involved in resistance to the rice blast fungus Magnaporthe oryzae. May contribute to host resistance to rice blast through interaction with SYP121. The sequence is that of SNAP25 homologous protein SNAP32 from Oryza sativa subsp. japonica (Rice).